A 477-amino-acid chain; its full sequence is Glycogen synthase (477 aa).

ADP-alpha-D-glucose is bound at residue lysine 16.

Belongs to the glycosyltransferase 1 family. Bacterial/plant glycogen synthase subfamily.

It carries out the reaction [(1-&gt;4)-alpha-D-glucosyl](n) + ADP-alpha-D-glucose = [(1-&gt;4)-alpha-D-glucosyl](n+1) + ADP + H(+). The protein operates within glycan biosynthesis; glycogen biosynthesis. In terms of biological role, synthesizes alpha-1,4-glucan chains using ADP-glucose. The sequence is that of Glycogen synthase from Oceanobacillus iheyensis (strain DSM 14371 / CIP 107618 / JCM 11309 / KCTC 3954 / HTE831).